We begin with the raw amino-acid sequence, 243 residues long: Probable septum site-determining protein MinC (243 aa).

The protein belongs to the MinC family. In terms of assembly, interacts with MinD and FtsZ.

In terms of biological role, cell division inhibitor that blocks the formation of polar Z ring septums. Rapidly oscillates between the poles of the cell to destabilize FtsZ filaments that have formed before they mature into polar Z rings. Prevents FtsZ polymerization. This chain is Probable septum site-determining protein MinC, found in Wigglesworthia glossinidia brevipalpis.